We begin with the raw amino-acid sequence, 618 residues long: Keratin, type I cytoskeletal 9 (618 aa).

Residues 1–49 form a disordered region; that stretch reads MSFRQISSSFRSSSGSSCGGGGGRGASRGSMRSSFGRSSRAGGESRFGS. Positions 1 to 137 are head; that stretch reads MSFRQISSSF…GGEGSILNTN (137 aa). Residues 7–16 show a composition bias toward low complexity; sequence SSSFRSSSGS. A phosphoserine mark is found at Ser-14 and Ser-17. Residues 17-26 are compositionally biased toward gly residues; that stretch reads SCGGGGGRGA. Over residues 27 to 49 the composition is skewed to low complexity; it reads SRGSMRSSFGRSSRAGGESRFGS. The interval 138-173 is coil 1A; that stretch reads EKVVMQNLNSRLASYMDKVQELEEDNANLEKQIQEW. In terms of domain architecture, IF rod spans 138 to 450; the sequence is EKVVMQNLNS…KLLEGGQQDF (313 aa). Residues 174 to 192 are linker 1; sequence YSRKGNRVFQKDYSHYYNT. The interval 193–284 is coil 1B; that stretch reads IEDLKDRIVD…KSHKEEMNQL (92 aa). The interval 285 to 307 is linker 12; that stretch reads TGLNDGDVNVEINVAPSTDLTQV. The segment at 308 to 446 is coil 2; it reads LNDMREEYEH…ETYRKLLEGG (139 aa). The segment at 447-609 is tail; that stretch reads QQDFESSGAG…GGGNTRPSQS (163 aa). The tract at residues 449 to 618 is disordered; that stretch reads DFESSGAGQI…SQSSQIPRLR (170 aa). Residues 456-603 show a composition bias toward gly residues; it reads GQIGFGSGKG…GSGGSYGGGN (148 aa). Positions 607–618 are enriched in low complexity; that stretch reads SQSQSSQIPRLR.

This sequence belongs to the intermediate filament family. In terms of assembly, heterotetramer of two type I and two type II keratins. In terms of tissue distribution, expressed in the perinuclear ring of spermatid manchettes within testis and in keratinocytes of the suprabasal layer of footpad epidermis (at protein level).

Functionally, may serve an important special function either in the mature palmar and plantar skin tissue or in the morphogenetic program of the formation of these tissues. Plays a role in keratin filament assembly. May be involved in spermatid nuclear shaping and sperm development. In Rattus norvegicus (Rat), this protein is Keratin, type I cytoskeletal 9 (Krt9).